Consider the following 718-residue polypeptide: Cyclomaltodextrin glucanotransferase (718 aa).

Residues methionine 1–alanine 34 form the signal peptide. Positions aspartate 35–proline 172 are A1. Ca(2+) is bound by residues aspartate 61, asparagine 63, asparagine 66, and asparagine 67. Residues cysteine 77 and cysteine 84 are joined by a disulfide bond. Residues glycine 85 and aspartate 87 each coordinate Ca(2+). Tyrosine 134–tryptophan 135 lines the substrate pocket. A Ca(2+)-binding site is contributed by asparagine 173. A b region spans residues asparagine 173–histidine 236. Histidine 174 is a binding site for substrate. Ca(2+) is bound at residue isoleucine 224. Residue asparagine 227–aspartate 230 coordinates substrate. Aspartate 233 is a Ca(2+) binding site. Positions asparagine 237 to tyrosine 440 are A2. A substrate-binding site is contributed by arginine 261. The active-site Nucleophile is aspartate 263. Lysine 266–histidine 267 lines the substrate pocket. Residue histidine 267 coordinates Ca(2+). Glutamate 291 (proton donor) is an active-site residue. Substrate is bound by residues histidine 361, aspartate 405, and arginine 409. The segment at glycine 441–serine 528 is c. Positions glutamate 529 to leucine 614 are d. Residues proline 532–threonine 612 enclose the IPT/TIG domain. Residues isoleucine 613–glutamine 718 enclose the CBM20 domain. The interval serine 615 to glutamine 718 is e.

The protein belongs to the glycosyl hydrolase 13 family. As to quaternary structure, monomer. The cofactor is Ca(2+).

The protein resides in the secreted. The catalysed reaction is Cyclizes part of a (1-&gt;4)-alpha-D-glucan chain by formation of a (1-&gt;4)-alpha-D-glucosidic bond.. The protein is Cyclomaltodextrin glucanotransferase (cgtA) of Bacillus licheniformis.